The primary structure comprises 237 residues: Demethylmenaquinone methyltransferase (237 aa).

S-adenosyl-L-methionine is bound by residues Thr-58, Asp-79, and 106 to 107 (NA).

It belongs to the class I-like SAM-binding methyltransferase superfamily. MenG/UbiE family.

It catalyses the reaction a 2-demethylmenaquinol + S-adenosyl-L-methionine = a menaquinol + S-adenosyl-L-homocysteine + H(+). The protein operates within quinol/quinone metabolism; menaquinone biosynthesis; menaquinol from 1,4-dihydroxy-2-naphthoate: step 2/2. Its function is as follows. Methyltransferase required for the conversion of demethylmenaquinol (DMKH2) to menaquinol (MKH2). The polypeptide is Demethylmenaquinone methyltransferase (Bacillus cytotoxicus (strain DSM 22905 / CIP 110041 / 391-98 / NVH 391-98)).